A 215-amino-acid chain; its full sequence is Ion-translocating oxidoreductase complex subunit G (215 aa).

Residues 9-29 (GLILSLFAIITSGLIALTYFG) traverse the membrane as a helical segment. Thr-176 is modified (FMN phosphoryl threonine).

The protein belongs to the RnfG family. The complex is composed of six subunits: RnfA, RnfB, RnfC, RnfD, RnfE and RnfG. FMN serves as cofactor.

Its subcellular location is the cell inner membrane. Functionally, part of a membrane-bound complex that couples electron transfer with translocation of ions across the membrane. The chain is Ion-translocating oxidoreductase complex subunit G from Pseudoalteromonas atlantica (strain T6c / ATCC BAA-1087).